The chain runs to 128 residues: NHP2-like protein 1 (128 aa).

Residues 36–48 (RKGANEATKTLNR) form an interaction with U4 snRNA and U4atac snRNA region. An important for U4 snRNA-binding region spans residues 96–128 (SRPVIACAVTIKEGSQLKPQIQSLQQSIERLLV).

It belongs to the eukaryotic ribosomal protein eL8 family. Identified in the spliceosome B complex. Component of the U4/U6-U5 tri-snRNP complex. Part of the small subunit (SSU) processome, composed of more than 70 proteins and the RNA chaperone small nucleolar RNA (snoRNA) U3.

The protein localises to the nucleus. It localises to the nucleolus. Functionally, part of the small subunit (SSU) processome, first precursor of the small eukaryotic ribosomal subunit. During the assembly of the SSU processome in the nucleolus, many ribosome biogenesis factors, an RNA chaperone and ribosomal proteins associate with the nascent pre-rRNA and work in concert to generate RNA folding, modifications, rearrangements and cleavage as well as targeted degradation of pre-ribosomal RNA by the RNA exosome. Involved in pre-mRNA splicing as component of the spliceosome. Binds to the 5'-stem-loop of U4 snRNA and thereby contributes to spliceosome assembly. The protein undergoes a conformational change upon RNA-binding. Core component of box C/D small nucleolar ribonucleoprotein (snoRNP) complexes that function in methylation of multiple sites on ribosomal RNAs (rRNAs) and messenger RNAs (mRNAs). The chain is NHP2-like protein 1 from Xenopus tropicalis (Western clawed frog).